The following is a 776-amino-acid chain: MTETTALASSTASSQPSSQASSQVLSLDLIITCADGLEAPLQTELTSFGIASEIKSTGRLAVTGTLRDLYKICLWSRVASRVLMLIKRKNINAEYDVAEQLYGLAKSVNWTEQFSLEQTFAIRLSVDKRVAVSQQFAMLRIKDAIADTFNEVYESRPNVDSKNPDFSVFATVNDKQAELYLDLSGTSLHRRGYRVAMTEAPLKENLAAALLYSAGWHKKNEAGDTPFYNALIDPMCGSGTFIIEALLMHCDYAVGIDKAANQFGFYEWQHHDAALWQEMIDDAQTRFRAALEIANEQPDTLPLIFGFDADNGAIIATEKNLIAAGLQDLLPLLDIETRALDQLSTLLKPLVADGRLSNPLIITNPPYGERLGDEEMIKPLYQSIGLILQDSFAGSGIDPMLGILASHVEQVDILPIREPKTLRCHNGAITVYFRYGTLIAGQTGNLVSRFEKREIEVEDGQDFINRLQKNLTRLKKLAKKDNVSNIRVYNADLPDFKVAIDLYGDYAHVQEYAPPKTIPPETAKKRFNLALMGIREVFGINREQIFIKTRARQSGNDQYSKQGNTEKRGKFYIAREDGAYLYVNFTDYLDTGLFIDHRNMRARIKDNSRNKSVLNLFAYTCTASVHAALAGAKKVTSVDLSQNYLDWGKQNFALNGLNVSSNKYQFVAADIFEWIKDNTEQFDIIFIDPPTFSNSKKFQGTFDVQRDHAALINRAMNRLTADGILYFSNNFTRFELDEQLTERYDIIDITQKTIGFDFDIKKPIHQSFEIRHRQSL.

In terms of domain architecture, THUMP spans 68–183 (DLYKICLWSR…DKQAELYLDL (116 aa)).

This sequence belongs to the methyltransferase superfamily. RlmKL family.

It localises to the cytoplasm. The enzyme catalyses guanosine(2445) in 23S rRNA + S-adenosyl-L-methionine = N(2)-methylguanosine(2445) in 23S rRNA + S-adenosyl-L-homocysteine + H(+). It carries out the reaction guanosine(2069) in 23S rRNA + S-adenosyl-L-methionine = N(2)-methylguanosine(2069) in 23S rRNA + S-adenosyl-L-homocysteine + H(+). Its function is as follows. Specifically methylates the guanine in position 2445 (m2G2445) and the guanine in position 2069 (m7G2069) of 23S rRNA. This Psychrobacter cryohalolentis (strain ATCC BAA-1226 / DSM 17306 / VKM B-2378 / K5) protein is Ribosomal RNA large subunit methyltransferase K/L.